A 429-amino-acid polypeptide reads, in one-letter code: MIEPRDELGTATTDSAQKILLLGSGELGKEIAIEAQRLGVEVIAVDRYANAPAMQVAHRSYVGNMMDKDFLWSVVEREKPDAIIPEIEAINLDALFEFEKEGYFVVPNARATWIAMHRERLRETLVKEAKVPTSRYMYATTLDELYEACEKIGYPCHTKAIMSSSGKGSYFVKGPEDIPKAWEEAKTKARGSAEKIIVEEHIDFDVEITELAVRHFDENGEIVTTFPKPVGHYQIDGDYHASWQPAEISEKAEREVYRIAKRITDVLGGLGLFGVEMFVKGDKVWANEVSPRPHDTGMVTLASHPPGFSEFGLHLRAVLGLPIPGEWVDGYRLFPMLIPAATHVIKAKVKGYSPRFRGLAKALSVPNATVRLFGKPEAYVGRRLGVVLAWDKDVQEAKKRAEMVAHMIELRTRSSDWHDQNYEKRKHLL.

N(1)-(5-phospho-beta-D-ribosyl)glycinamide-binding positions include 26–27 (EL) and Glu86. ATP contacts are provided by residues Arg118, Lys159, 199 to 202 (EEHI), and Glu207. Positions 123–319 (ETLVKEAKVP…EFGLHLRAVL (197 aa)) constitute an ATP-grasp domain. 2 residues coordinate Mg(2+): Glu276 and Glu288. N(1)-(5-phospho-beta-D-ribosyl)glycinamide contacts are provided by residues Asp295, Lys375, and 382-383 (RR).

The protein belongs to the PurK/PurT family. Homodimer.

The enzyme catalyses N(1)-(5-phospho-beta-D-ribosyl)glycinamide + formate + ATP = N(2)-formyl-N(1)-(5-phospho-beta-D-ribosyl)glycinamide + ADP + phosphate + H(+). It participates in purine metabolism; IMP biosynthesis via de novo pathway; N(2)-formyl-N(1)-(5-phospho-D-ribosyl)glycinamide from N(1)-(5-phospho-D-ribosyl)glycinamide (formate route): step 1/1. In terms of biological role, involved in the de novo purine biosynthesis. Catalyzes the transfer of formate to 5-phospho-ribosyl-glycinamide (GAR), producing 5-phospho-ribosyl-N-formylglycinamide (FGAR). Formate is provided by PurU via hydrolysis of 10-formyl-tetrahydrofolate. In Pyrococcus abyssi (strain GE5 / Orsay), this protein is Formate-dependent phosphoribosylglycinamide formyltransferase.